A 110-amino-acid chain; its full sequence is Large ribosomal subunit protein uL22 (110 aa).

Belongs to the universal ribosomal protein uL22 family. In terms of assembly, part of the 50S ribosomal subunit.

In terms of biological role, this protein binds specifically to 23S rRNA; its binding is stimulated by other ribosomal proteins, e.g. L4, L17, and L20. It is important during the early stages of 50S assembly. It makes multiple contacts with different domains of the 23S rRNA in the assembled 50S subunit and ribosome. The globular domain of the protein is located near the polypeptide exit tunnel on the outside of the subunit, while an extended beta-hairpin is found that lines the wall of the exit tunnel in the center of the 70S ribosome. The chain is Large ribosomal subunit protein uL22 from Hahella chejuensis (strain KCTC 2396).